Reading from the N-terminus, the 404-residue chain is Methyltransferase-like protein 22 (404 aa).

Disordered stretches follow at residues 60-102 (TDSG…SLQA) and 115-145 (QLDEDGDLDVVRRPRAASDSNPAGPLRDKVH). A compositionally biased stretch (basic and acidic residues) spans 68–78 (SHRDVHTKEPP). Positions 79 to 88 (SAETGSTGSP) are enriched in low complexity. Serine 132 bears the Phosphoserine mark.

Belongs to the methyltransferase superfamily. METTL22 family. As to quaternary structure, interacts with members of the heat shock protein 90 and 70 families; these proteins probably are methylation substrates.

It localises to the nucleus. It catalyses the reaction L-lysyl-[protein] + 3 S-adenosyl-L-methionine = N(6),N(6),N(6)-trimethyl-L-lysyl-[protein] + 3 S-adenosyl-L-homocysteine + 3 H(+). Its function is as follows. Protein N-lysine methyltransferase. Trimethylates KIN at Lys-135 (in vitro). The chain is Methyltransferase-like protein 22 (METTL22) from Homo sapiens (Human).